A 417-amino-acid chain; its full sequence is UDP-N-acetylglucosamine 1-carboxyvinyltransferase (417 aa).

22-23 (KN) serves as a coordination point for phosphoenolpyruvate. UDP-N-acetyl-alpha-D-glucosamine is bound at residue Arg91. Cys115 serves as the catalytic Proton donor. Position 115 is a 2-(S-cysteinyl)pyruvic acid O-phosphothioketal (Cys115). UDP-N-acetyl-alpha-D-glucosamine is bound by residues 120 to 124 (RPVDL), Asp304, and Ile326.

The protein belongs to the EPSP synthase family. MurA subfamily.

The protein resides in the cytoplasm. It catalyses the reaction phosphoenolpyruvate + UDP-N-acetyl-alpha-D-glucosamine = UDP-N-acetyl-3-O-(1-carboxyvinyl)-alpha-D-glucosamine + phosphate. Its pathway is cell wall biogenesis; peptidoglycan biosynthesis. In terms of biological role, cell wall formation. Adds enolpyruvyl to UDP-N-acetylglucosamine. The protein is UDP-N-acetylglucosamine 1-carboxyvinyltransferase of Nitratidesulfovibrio vulgaris (strain DSM 19637 / Miyazaki F) (Desulfovibrio vulgaris).